A 223-amino-acid chain; its full sequence is UPF0641 membrane protein PJ4664.05 (223 aa).

5 helical membrane passes run 10–30 (FNSF…FNWI), 49–69 (LTVL…FSDI), 81–101 (ILLY…WSIV), 146–166 (LSIG…MLWV), and 190–210 (TIFY…LKMV).

The protein belongs to the UPF0641 family.

The protein resides in the endoplasmic reticulum membrane. The polypeptide is UPF0641 membrane protein PJ4664.05 (Schizosaccharomyces pombe (strain 972 / ATCC 24843) (Fission yeast)).